A 553-amino-acid chain; its full sequence is Ubiquitin carboxyl-terminal hydrolase 17-like protein 15 (553 aa).

One can recognise a USP domain in the interval Ala80–Lys375. The Nucleophile role is filled by Cys89. His334 functions as the Proton acceptor in the catalytic mechanism. Composition is skewed to basic and acidic residues over residues Ser382–Arg392 and Asp398–Pro413. Disordered regions lie at residues Ser382–Pro413 and Ser491–Arg524. Polar residues predominate over residues His496–Leu505. Positions Gly510–Arg524 are enriched in basic residues.

This sequence belongs to the peptidase C19 family. USP17 subfamily.

Its subcellular location is the nucleus. The protein resides in the endoplasmic reticulum. The catalysed reaction is Thiol-dependent hydrolysis of ester, thioester, amide, peptide and isopeptide bonds formed by the C-terminal Gly of ubiquitin (a 76-residue protein attached to proteins as an intracellular targeting signal).. Deubiquitinating enzyme that removes conjugated ubiquitin from specific proteins to regulate different cellular processes that may include cell proliferation, progression through the cell cycle, apoptosis, cell migration, and the cellular response to viral infection. The chain is Ubiquitin carboxyl-terminal hydrolase 17-like protein 15 (USP17L15) from Homo sapiens (Human).